The sequence spans 351 residues: Inhibin beta C chain (351 aa).

The N-terminal stretch at M1–V18 is a signal peptide. The propeptide occupies N19 to G236. 3 N-linked (GlcNAc...) asparagine glycosylation sites follow: N110, N142, and N160. 4 disulfides stabilise this stretch: C239/C247, C246/C316, C275/C348, and C279/C350.

It belongs to the TGF-beta family. In terms of assembly, homodimeric or heterodimeric through association with alpha and beta subunits, linked by one or more disulfide bonds. Inhibins are heterodimers of one alpha and one beta subunit. Activins are homo- or heterodimers of beta subunits only.

The protein resides in the secreted. Inhibins and activins inhibit and activate, respectively, the secretion of follitropin by the pituitary gland. Inhibins/activins are involved in regulating a number of diverse functions such as hypothalamic and pituitary hormone secretion, gonadal hormone secretion, germ cell development and maturation, erythroid differentiation, insulin secretion, nerve cell survival, embryonic axial development or bone growth, depending on their subunit composition. Inhibins appear to oppose the functions of activins. This chain is Inhibin beta C chain (Inhbc), found in Rattus norvegicus (Rat).